Reading from the N-terminus, the 537-residue chain is Tripeptidyl aminopeptidase (537 aa).

The signal sequence occupies residues 1–36 (MRKSSIRRRATAFGTAGALVTATLIAGAVSAPAASA). Positions 37-39 (APA) are excised as a propeptide. An AB hydrolase-1 domain is found at 119-497 (GALIYNPGGP…SRLITERDAG (379 aa)). The active-site Nucleophile is S245. D470 is an active-site residue. Residue H499 is the Proton donor of the active site.

The protein belongs to the peptidase S33 family.

The protein resides in the secreted. Cleaves tripeptides from the N-termini of proteins. Does not cleave mono- or dipeptides, or N-terminally blocked peptides. The polypeptide is Tripeptidyl aminopeptidase (Streptomyces lividans).